Here is a 119-residue protein sequence, read N- to C-terminus: Ribonuclease P protein component (119 aa).

It belongs to the RnpA family. In terms of assembly, consists of a catalytic RNA component (M1 or rnpB) and a protein subunit.

It catalyses the reaction Endonucleolytic cleavage of RNA, removing 5'-extranucleotides from tRNA precursor.. RNaseP catalyzes the removal of the 5'-leader sequence from pre-tRNA to produce the mature 5'-terminus. It can also cleave other RNA substrates such as 4.5S RNA. The protein component plays an auxiliary but essential role in vivo by binding to the 5'-leader sequence and broadening the substrate specificity of the ribozyme. The protein is Ribonuclease P protein component of Pediococcus pentosaceus (strain ATCC 25745 / CCUG 21536 / LMG 10740 / 183-1w).